Reading from the N-terminus, the 44-residue chain is Small, acid-soluble spore protein N (44 aa).

The disordered stretch occupies residues 1–44 (MGNPKKNSKDFAPNHIGTQSKKAGGNKGKQMQDQTGKQPIVDNG).

It belongs to the SspN family.

Its subcellular location is the spore core. The chain is Small, acid-soluble spore protein N from Bacillus anthracis (strain A0248).